The primary structure comprises 113 residues: Class I hydrophobin fvh1 (113 aa).

An N-terminal signal peptide occupies residues 1–20 (MVSFRAFTVAASLFATLAAA). 4 cysteine pairs are disulfide-bonded: Cys34/Cys94, Cys41/Cys88, Cys42/Cys75, and Cys95/Cys108. Residue Asn35 is glycosylated (N-linked (GlcNAc...) asparagine). Asn97 carries N-linked (GlcNAc...) asparagine glycosylation.

This sequence belongs to the fungal hydrophobin family. Self-assembles to form functional amyloid fibrils called rodlets. Self-assembly into fibrillar rodlets occurs spontaneously at hydrophobic:hydrophilic interfaces and the rodlets further associate laterally to form amphipathic monolayers.

The protein localises to the secreted. The protein resides in the cell wall. In terms of biological role, aerial growth, conidiation, and dispersal of filamentous fungi in the environment rely upon a capability of their secreting small amphipathic proteins called hydrophobins (HPBs) with low sequence identity. Class I can self-assemble into an outermost layer of rodlet bundles on aerial cell surfaces, conferring cellular hydrophobicity that supports fungal growth, development and dispersal; whereas Class II form highly ordered films at water-air interfaces through intermolecular interactions but contribute nothing to the rodlet structure. Fvh1 is a class I hydrophobin involved in fruiting body initiation. In Flammulina velutipes (Agaricus velutipes), this protein is Class I hydrophobin fvh1.